Consider the following 135-residue polypeptide: Translation initiation factor 2 subunit beta (135 aa).

The protein belongs to the eIF-2-beta/eIF-5 family. As to quaternary structure, heterotrimer composed of an alpha, a beta and a gamma chain.

EIF-2 functions in the early steps of protein synthesis by forming a ternary complex with GTP and initiator tRNA. This Methanobrevibacter smithii (strain ATCC 35061 / DSM 861 / OCM 144 / PS) protein is Translation initiation factor 2 subunit beta.